A 276-amino-acid chain; its full sequence is Bifunctional esterase/perhydrolase DCH (276 aa).

One can recognise an AB hydrolase-1 domain in the interval 23–254 (PVIFFHHGWP…NGKLISYPGF (232 aa)). Catalysis depends on residues S97, D227, and H256.

The protein belongs to the AB hydrolase superfamily. Bacterial non-heme haloperoxidase / perhydrolase family. As to quaternary structure, homodimer.

It carries out the reaction 3,4-dihydrocoumarin + H2O = 3-(2-hydroxyphenyl)propanoate + H(+). The catalysed reaction is peracetic acid + H2O = acetate + H2O2 + H(+). It catalyses the reaction a percarboxylic acid + H2O = a carboxylate + H2O2 + H(+). Its activity is regulated as follows. Inhibited by the serine protease inhibitors diisopropyl fluorophosphate and phenylmethanesulfonyl fluoride. In terms of biological role, multifunctional enzyme, which shows esterase and perhydrolase activities, and is capable of organic acid-assisted bromination of organic compounds. Catalyzes the hydrolysis of 3,4-dihydrocoumarin. Aromatic lactones other than 3,4-dihydrocoumarin, such as 2-coumaranone and homogentisic acid lactone, are also substrates, but their activities relative to that of 3,4-dihydrocoumarin are quite low. Also catalyzes the hydrolysis of several linear esters, with specificity toward methyl esters. In addition, shows perhydrolase activity and catalyzes the dose- and time-dependent degradation of peracetic acid, a broad-spectrum biocide, to acetic acid and hydrogen peroxide. It suggests that in vivo DCH may play a role in the oxidative stress defense system and detoxify peroxoacids in conjunction with the catalase, i.e. peroxoacids are first hydrolyzed to the corresponding acids and hydrogen peroxide by DCH, and then the resulting hydrogen peroxide is degraded by the catalase. Also shows organic acid-assisted bromination activity toward monochlorodimedon when incubated with hydrogen peroxide and dihydrocoumarin or an organic acid, such as acetate and n-butyrate. The chain is Bifunctional esterase/perhydrolase DCH from Acinetobacter calcoaceticus.